A 266-amino-acid chain; its full sequence is Type III pantothenate kinase (266 aa).

6 to 13 (DAGNTNIV) lines the ATP pocket. Substrate is bound by residues Tyr100 and 107-110 (GADR). Catalysis depends on Asp109, which acts as the Proton acceptor. K(+) is bound at residue Asp129. Thr132 contributes to the ATP binding site. Residue Thr184 coordinates substrate.

It belongs to the type III pantothenate kinase family. In terms of assembly, homodimer. The cofactor is NH4(+). Requires K(+) as cofactor.

It is found in the cytoplasm. The catalysed reaction is (R)-pantothenate + ATP = (R)-4'-phosphopantothenate + ADP + H(+). It participates in cofactor biosynthesis; coenzyme A biosynthesis; CoA from (R)-pantothenate: step 1/5. Its function is as follows. Catalyzes the phosphorylation of pantothenate (Pan), the first step in CoA biosynthesis. The protein is Type III pantothenate kinase of Clostridium beijerinckii (strain ATCC 51743 / NCIMB 8052) (Clostridium acetobutylicum).